The primary structure comprises 174 residues: Co-chaperone protein HscB homolog (174 aa).

The J domain maps to 2-74; that stretch reads NYFELFKFSP…IRRAEHMLSL (73 aa).

This sequence belongs to the HscB family. As to quaternary structure, interacts with HscA and stimulates its ATPase activity.

Co-chaperone involved in the maturation of iron-sulfur cluster-containing proteins. Seems to help targeting proteins to be folded toward HscA. The sequence is that of Co-chaperone protein HscB homolog from Shewanella baltica (strain OS223).